A 236-amino-acid polypeptide reads, in one-letter code: MNMMDANEIIAFIQKSEKKTPVKVYVKGNLEGIDFGASSKAFITGPTGVVFGEWKEIEPVLAANADKIEDYVVESDRRNSAIPLLDTKGIQARIEPGAIIRDQVTIGNNAVIMMGASINIGAVIGEGTMIDMNVVVGGRGTIGKNCHIGAGSVIAGVIEPPSAQPVVVEDDVVIGANAVILEGVRVGKGAVVAAGAVVIEDVPPYVVVAGTPARVIKQIDEKTRSKTEIKQELRQL.

Belongs to the transferase hexapeptide repeat family. DapH subfamily.

The enzyme catalyses (S)-2,3,4,5-tetrahydrodipicolinate + acetyl-CoA + H2O = L-2-acetamido-6-oxoheptanedioate + CoA. It participates in amino-acid biosynthesis; L-lysine biosynthesis via DAP pathway; LL-2,6-diaminopimelate from (S)-tetrahydrodipicolinate (acetylase route): step 1/3. Catalyzes the transfer of an acetyl group from acetyl-CoA to tetrahydrodipicolinate. This is 2,3,4,5-tetrahydropyridine-2,6-dicarboxylate N-acetyltransferase from Brevibacillus brevis (strain 47 / JCM 6285 / NBRC 100599).